Consider the following 967-residue polypeptide: Transmembrane channel-like protein 5 (967 aa).

4 stretches are compositionally biased toward polar residues: residues 1–10 (MSSFHQNSSY), 21–31 (GSRNHTHNYLE), 53–62 (NPHSSGSRTN), and 168–184 (QDNS…SNLP). The disordered stretch occupies residues 1–240 (MSSFHQNSSY…EEGDGYSSSK (240 aa)). Residues 1–420 (MSSFHQNSSY…YFSFLRWLLK (420 aa)) are Extracellular-facing. The chain crosses the membrane as a helical span at residues 421–441 (FNIFSFVMNFSFIIIPQFTVG). The Cytoplasmic portion of the chain corresponds to 442-449 (AKNTLQFT). A helical transmembrane segment spans residues 450-470 (GLEFFTGAGYFGDTVMYYGFY). Residues 471–487 (TNSTIRHRMGGASYNMQ) lie on the Extracellular side of the membrane. The helical transmembrane segment at 488 to 508 (LAYIFTIGACLVVCFFSLLFS) threads the bilayer. At 509-581 (MAKYFRNNFI…NQQLTRFSAH (73 aa)) the chain is on the cytoplasmic side. Residues 582–602 (VAAWLVSTGVTAACCVAVYYL) form a helical membrane-spanning segment. Residues 603 to 616 (AEYNSEFLKTHRNP) are Extracellular-facing. The helical transmembrane segment at 617-637 (GAVLLLPFVVSCINLAVPRFY) threads the bilayer. At 638-660 (SMFRLVERYEIPRQEVYVLLVRN) the chain is on the cytoplasmic side. The helical transmembrane segment at 661-681 (IFLKISIVGILCYYWLNIVAL) threads the bilayer. Residues 682–694 (SGEECWETLIGQD) lie on the Extracellular side of the membrane. A helical membrane pass occupies residues 695–715 (IYRLLLMDFVFSLADSLLGEF). Topologically, residues 716 to 749 (LRRLIGMKFTSLSLQEFDIARNVLELIYAQTLTW) are cytoplasmic. The chain crosses the membrane as a helical span at residues 750–770 (LGIFFCPLLPFIQMITLFIMF). Residues 771 to 796 (YVKNVSLMMNFQPPSKAWRASQMITF) are Extracellular-facing. The chain crosses the membrane as a helical span at residues 797-817 (FIFLLFFPSFTGVLCTLAITI). The Cytoplasmic portion of the chain corresponds to 818–861 (WRLKPSADCGPFRGLPSFIQSIYSWIDTLSRRPGYLWVVWIYQN). The chain crosses the membrane as a helical span at residues 862-882 (LIGSVHFFFILTLIVLIITYL). Topologically, residues 883–967 (YWQITEGRKV…RSAQEENPIA (85 aa)) are extracellular.

The protein belongs to the TMC family. In terms of tissue distribution, ubiquitously expressed.

The protein resides in the membrane. In terms of biological role, probable component of an ion channel. Molecular function hasn't been characterized yet. In Mus musculus (Mouse), this protein is Transmembrane channel-like protein 5.